The sequence spans 3332 residues: MLSPAVCYHTDEGKNGYTFPNLETPKNGVVQTPVQYLIQTAPLHDFCSHQMVDLRTLLQCAWSRVIAQLDSTTDLKADAIYGTKSKSLLEGFISEVKKSQQSTQLENERILTEKLLLPLNPRGTSSLSWLQNDLLCATGGEYGEQSTGGFELAQCGSWIAISASFNPLIVSSRWVNDYIEVFRSFLVALVVGDDELSAPENYLTPEDCARIRNWNSAVPPEINASILDVFSEQVKAHPGSTAVSGWDASLTYQELEDCADQLAYQLQSRGVGPGMLIPLCFEKSAWTVVAIIAVISTGAAFVLLDASQPEARLRSIVMQTRATLMITSSQKKDLGRRLVPEVVSVQPTKSTKNSERSRALRPVIKPDSLLYVVFTSGSTGQPKGAMISHSNFVSAVHYRRSELYNVTPRVLDFASYSFDISIESTLAPLLLGGCVCVPSDASREADPSDAIKAFNVNQVMLTPSVARLVEPENVPSLRLLHLGGEQISRFDIERWPSTVKLINGYGPAECTVVSTANTVSPSSPEAHTIGRGLGAVTWVVDPADTGRLVPVGAVGELVIEGPLVGSGYLHDEGRTLAAFIVDPPWLRAFGRRGRLYRTGDLVSYNSNGTLTFIGRKDTQVKVNGQRVELGEIEHNLQQEIYNQGNCVVDVVVDLISVNSNSGKQSILLAFLGLERAAQERFAASGTPSVQELTSAMWEILEPINLFKVLPRYMVPSIYIPLWRMPLLPSGKINRLKLRSMGESLSVDDLAAFRKPQVATVDTQGRITPQEKLLQSLWGQIFPHCAGSIQPDDNFFSLGGDSLTAMKLVGLIRKHGIENKHSETIRIADILQWPRLADMARCITRVDDKQGDVQDALFDLLPDHIAPSNARQIAAPQCDVQPEQIVDIYPCTPLQEGLMALSAERSGAYIAQNIFELSDRTNIDTLRMAWTHIVMSSVIFRTRIVQLDSQTLAQAVVTVPIEWECYDGKLNDFVAIDRHRPMGIGKALMRLTVVTERSEESLLKCFLVWTAHHAVFDDWILNLITSLVGKMYHGRPPSSFHLTPYKRFIRHLQELNRESFSNYWRQELEGTNAAIFPHLPSAVDKPVADATANFAFSLNDSKLNVHASLPTILRAAWSILVSRHTQTDDVIFGETLTGRNAPVAGVEEMDGPTLTTIPRRVKVQNEMRVAEFLEEIRRHEINSIPYEGFGLQNIQKLSDDARTACQFATLLVIQRDPEVSFDSPMINVTEKVLHEDCGEDGKPYASFFTTYPLMVTISIKDNQINIYASFDSRIIERSQMQVLMHQLEVITRQVIQEPHEVVGGINCLTRKELHQIWSWNRLPWVPVSGSVHDSIAEVSNTRPTAPAVCAWDGSLTYGELDNLSTRLGSYLFKVGVEAESLVPLCFEKSVWTIVSMLAVIKAGGAFVLLDPTQPKQRLGEIIVRAKANYVLTSPLQYGMVSDLASEFNLTIVLVSKSPLDALTDDATVTDRMPQHLDSDRPLFVTFTSGSTGKPKGVISTHGSYLSGVNYRRSILQLPNLDMRVFDFASYSFDVSTDVILSTLLTGGCVCVPSDFDRKNNIPGAINALRVNAADLTPSVSRLLSPESVPGLKVLKLGGEANTAADHALWLGKTTLVNIYGPSECLVVTAKTVLPGIDPCNIGRGLGANTWVADPTNHDRLAPIGSIGELLVEGPILGRGYLDDQKQTDAVFIHNPTWLVKGLPGFQPGREGRVYKTGDLVRYNPDGTLHYIGRKDRQLKVRGQRVEPAEIEGAIKRHMQSKLGMTIDVVADLVTSNRDQRKRLIAFLGLNQVLESRGYSEKDHLGDTVLRDIMWEVTAGLEVLLSQTLPPYMVPSVYVPLRHIPLLPSGKTDRRKLQSAAASLSPEDLSFFRERPKAQNRAIATPKEEKLQKIWADALGVKSIQAEDNFFTIGGDSIAAMRLVGLARDQGLLLSVADIFQRPRLYEMAEKAAETGTELLDIPAFSLLPGANPYVIDEREVAAAQCGCSIELIEDIYPCTPLQEGLMALSTKTPGAYISQNVFQMGNATNTDLMKEAWDYVVRSNPIMRTRVILSARQDLVQVTVQEGIHWASHDSLDCYLKYDRNTSMGLGMPLTRLAWVDDEMTKRSFLVWTAHHAIFDGWVLSLVMENVIRVYHGKSLHVGPPFKAFIKYLKELERAQMDTFWQDEFSGITATPFPALPSSTYQPKADVETKLEMSFTWSTTSNVTSSTFLRLAWAVLVARLTASSDVIFGETLNGRNAPIPGIERMIGPTLTTLPRRIVLEDGLPVADLLHRLKDHEIAMMPFEHVGLQHLQELSADCQAACKFQTLFVVQRGMDHDMSEMSLTISGDVSNFNSYALMLTCAPESDKILFHASHDSNVISPEKMQDVLNQLQNVVMQLSKKMDRPLREINCLSEIDTQQIWKWNHQLPESISIPVHEIIAQQAREHPATEAVCAWDGTFTYRELDTLAGQLAYHLKELGAVSTPGYHIPLCFEKSAWTVISILAVMKAGGSFVLLDVSQPQDRLQHIVSHIKANYILSSPRQSDLASSLAANVVVVSSDFVRSLRQLHTPGPLNPNSALYVVFTSGSTGKPKGVIITHLNFASGVHYRQNVMHMPGFRLLDFPSYSFDASVESNLVPLMIGGCVCIASDELCQNNLSAAISSTNANAVMLTPSSATLISPENAHSLKQLHLGGEKLTAANIETWADKLKLVVGYGPAECAVTTTGRIVKGMVPQKENIGPAFGAVTWLVDPASHDRLVPLGTIGELLIEGPIVGQGYVNDPERTAAAFIENPPWLLAGGGMFAGRQGRLYKTGDLARYDSDGTLIFIGRKDTQVKIRGQRVELQEIEHHVYQYLRDLTGLGLSIVADLISTCSDIANPTLVVFIELEAVMTQKGYLPDPGPAVLYNEMKSMVPGLDEALRNALPRYMIPSAYVPRWKLPMMPSGKLNRKQLRSDAESLTAEQWNHFRSLISAVSPAARGREVATNDEAAVQRLWADILRIAEKQIKADDSFFTLGGNSITAMKLVELARRRGILFNVADVFAHPVLSDLASRIGRVETTPLNQDDLAYAPLQRLMSSNPTLIQGQSSNIPLVMIHDGGGTTYAYHRMGPVNRPLYGIHFPGYASGTAWKGGIKSLGRHYADLIQKSLLSGPIILGGWSSGGLISLEVALCLKSGPFEVKGVIMVDSVFPAPSLVDETFLAPSSSETNDTAMAADGTLAKMNMFQFNSMLKEYSPPRFEDLFQDLDASKAGLCHEQRSNVNPITEDTHHAERFPVHLLRASSTKASIGELDENMKSFLDATLGWEHYRPRLVSEVDLIDAEHYSLFSANTVAETTRHIRDFCDRITKSRKV.

The adenylation 1 stretch occupies residues 230–622 (FSEQVKAHPG…IGRKDTQVKV (393 aa)). One can recognise a Carrier 1 domain in the interval 764-846 (GRITPQEKLL…DMARCITRVD (83 aa)). The residue at position 801 (Ser-801) is an O-(pantetheine 4'-phosphoryl)serine. The condensation 1 stretch occupies residues 886-1314 (DIYPCTPLQE…NCLTRKELHQ (429 aa)). The tract at residues 1336-1740 (EVSNTRPTAP…GRKDRQLKVR (405 aa)) is adenylation 2. Residues 1880-1954 (AIATPKEEKL…EMAEKAAETG (75 aa)) form the Carrier 2 domain. At Ser-1915 the chain carries O-(pantetheine 4'-phosphoryl)serine. The segment at 1992–2402 (EDIYPCTPLQ…CLSEIDTQQI (411 aa)) is condensation 2. Positions 2422–2819 (AQQAREHPAT…GRKDTQVKIR (398 aa)) are adenylation 3. In terms of domain architecture, Carrier 3 spans 2963–3039 (EVATNDEAAV…DLASRIGRVE (77 aa)). Residue Ser-3000 is modified to O-(pantetheine 4'-phosphoryl)serine. The thioesterase (TE) domain stretch occupies residues 3058–3323 (SSNPTLIQGQ…ETTRHIRDFC (266 aa)).

Belongs to the NRP synthetase family.

It participates in secondary metabolite biosynthesis. Functionally, nonribosomal peptide synthetase; part of the gene cluster that mediates the biosynthesis of imizoquins A to D, tripeptide-derived alkaloids that serve a protective role against oxidative stress that are essential for normal germination. ImqB is a canonical three-module NRPS that assembles the tripeptide backbone of the imizoquins via condensation of Trp, Tyr, and Leu-derived precursors. N-methylation by imqF and phenol oxidation by imqC, followed by cyclization via the FAD-dependent oxidase imqH carry out the three-step transformation of L-tyrosine into tetrahydroisoquinoline. Importantly, this sequence requires the presence of a free amine in the tyrosine moiety, indicating that isoquinoline formation occurs prior to peptide bond formation. The imidazolidin-4-one ring of imizoquins could form following additional oxidation of the methyl-derived bridgehead carbon by imqH. Lastly, O-methylation by imqG and leucine hydroxylation by imqE complete biosynthesis of the imizoquins. This is Nonribosomal peptide synthetase imqB from Aspergillus flavus (strain ATCC 200026 / FGSC A1120 / IAM 13836 / NRRL 3357 / JCM 12722 / SRRC 167).